Here is a 352-residue protein sequence, read N- to C-terminus: Light dependent period A (352 aa).

2 4Fe-4S ferredoxin-type domains span residues R88–V119 and R121–W144. [4Fe-4S] cluster is bound by residues C97, C101, C105, C109, C124, C127, C130, and C134.

Interacts with KaiA, CikA and SasA; the complexes do not follow circadian rhythms. The cofactor is [4Fe-4S] cluster.

Functions in an input pathway to the Kai circadian clock. Probably senses the metabolic state of the cell via plastoquinone levels and informs the clock to modulate the photoperiod length. Deletion decreases the ability of the bacteria to modulate the circadian period in response to altered light regimes. Mild overexpression increases the photoperiod. Rapidly degraded in the presence of the quinone analog DBMIB (2,5-dibromo-3-methyl-6-isopropyl-p-benzoquinone), an artifical electron acceptor for photosystem II that reduces the plastoquinone pool. Partially resonsible for sensitivity of CikA to DBMIB, influences the levels of KaiA. The sequence is that of Light dependent period A from Synechococcus elongatus (strain ATCC 33912 / PCC 7942 / FACHB-805) (Anacystis nidulans R2).